The sequence spans 1117 residues: Cytospin-A (1117 aa).

Disordered stretches follow at residues 1–176, 293–323, and 358–390; these read MKKA…NQIS, SLSPEITPGNQSDGGGTLTSSVEGSAPGSVE, and SSDDALDAPSSSESEGIPSIERSRKGSSGNASE. The segment covering 45 to 90 has biased composition (low complexity); sequence TAASLSKTKSSDDLLAGMAGGVTVTNGVKGKKSTCPSAAPSASAPA. Residues 93–117 show a composition bias toward polar residues; that stretch reads TVENKSKISTGTASSTKRSTSTGNK. Composition is skewed to basic and acidic residues over residues 120-131 and 158-171; these read SSTRERLRERTR and TATECDVRMSKSKS. The stretch at 168–280 forms a coiled coil; it reads KSKSDNQISD…LNALGFSLEQ (113 aa). Polar residues predominate over residues 293 to 303; the sequence is SLSPEITPGNQ. A compositionally biased stretch (low complexity) spans 358–377; that stretch reads SSDDALDAPSSSESEGIPSI. A phosphoserine mark is found at Ser384, Ser385, and Ser389. Coiled-coil stretches lie at residues 394–449 and 487–807; these read ACLT…MESL and RYME…RGRV. 3 positions are modified to phosphoserine: Ser868, Ser881, and Ser887. Residues 920 to 997 form a disordered region; it reads TSSASRPASL…PTTRSRIREE (78 aa). The segment covering 946-956 has biased composition (basic and acidic residues); it reads RSSEEVKRDIS. Positions 971–990 are enriched in low complexity; sequence TTSPQLSLSSSPTASVTPTT. The Calponin-homology (CH) domain occupies 1011 to 1116; the sequence is GSKRNALLKW…YVTAIYKYFE (106 aa).

Belongs to the cytospin-A family. May interact with both microtubules and actin cytoskeleton.

Its subcellular location is the cytoplasm. It localises to the cytoskeleton. It is found in the spindle. The protein resides in the cell junction. The protein localises to the gap junction. Functionally, involved in cytokinesis and spindle organization. May play a role in actin cytoskeleton organization and microtubule stabilization and hence required for proper cell adhesion and migration. The protein is Cytospin-A (SPECC1L) of Homo sapiens (Human).